We begin with the raw amino-acid sequence, 233 residues long: Phosphoribosylformylglycinamidine synthase subunit PurQ (233 aa).

Positions 3-233 (SAILVFPGIN…GLVAHLERAA (231 aa)) constitute a Glutamine amidotransferase type-1 domain. Residue Cys87 is the Nucleophile of the active site. Residues His204 and Glu206 contribute to the active site.

In terms of assembly, part of the FGAM synthase complex composed of 1 PurL, 1 PurQ and 2 PurS subunits.

The protein resides in the cytoplasm. It carries out the reaction N(2)-formyl-N(1)-(5-phospho-beta-D-ribosyl)glycinamide + L-glutamine + ATP + H2O = 2-formamido-N(1)-(5-O-phospho-beta-D-ribosyl)acetamidine + L-glutamate + ADP + phosphate + H(+). The catalysed reaction is L-glutamine + H2O = L-glutamate + NH4(+). It participates in purine metabolism; IMP biosynthesis via de novo pathway; 5-amino-1-(5-phospho-D-ribosyl)imidazole from N(2)-formyl-N(1)-(5-phospho-D-ribosyl)glycinamide: step 1/2. Part of the phosphoribosylformylglycinamidine synthase complex involved in the purines biosynthetic pathway. Catalyzes the ATP-dependent conversion of formylglycinamide ribonucleotide (FGAR) and glutamine to yield formylglycinamidine ribonucleotide (FGAM) and glutamate. The FGAM synthase complex is composed of three subunits. PurQ produces an ammonia molecule by converting glutamine to glutamate. PurL transfers the ammonia molecule to FGAR to form FGAM in an ATP-dependent manner. PurS interacts with PurQ and PurL and is thought to assist in the transfer of the ammonia molecule from PurQ to PurL. The protein is Phosphoribosylformylglycinamidine synthase subunit PurQ of Nitrobacter hamburgensis (strain DSM 10229 / NCIMB 13809 / X14).